A 682-amino-acid chain; its full sequence is Beta-galactosidase (682 aa).

The N-terminal stretch at Met-1 to Gly-23 is a signal peptide. A propeptide spanning residues Leu-24–Thr-28 is cleaved from the precursor. Asn-26 carries an N-linked (GlcNAc...) asparagine glycan. The substrate site is built by Tyr-83, Glu-129, and Asn-187. Residue Glu-188 is the Proton donor of the active site. A disulfide bridge connects residues Cys-195 and Cys-230. Asn-247 is a glycosylation site (N-linked (GlcNAc...) asparagine). Glu-268 acts as the Nucleophile in catalysis. Tyr-333 contributes to the substrate binding site. 4 N-linked (GlcNAc...) asparagine glycosylation sites follow: Asn-464, Asn-498, Asn-545, and Asn-555. Cys-626 and Cys-634 are joined by a disulfide.

This sequence belongs to the glycosyl hydrolase 35 family. Homodimer. May form higher multimers.

Its subcellular location is the lysosome. The catalysed reaction is Hydrolysis of terminal non-reducing beta-D-galactose residues in beta-D-galactosides.. Its function is as follows. Cleaves beta-linked terminal galactosyl residues from gangliosides, glycoproteins, and glycosaminoglycans. This is Beta-galactosidase (GLB1) from Macaca fascicularis (Crab-eating macaque).